A 209-amino-acid chain; its full sequence is UPF0319 protein VF_1616 (209 aa).

The first 21 residues, 1–21, serve as a signal peptide directing secretion; it reads MKIQSIFAASFCLLSSISAHA.

Belongs to the UPF0319 family.

In Aliivibrio fischeri (strain ATCC 700601 / ES114) (Vibrio fischeri), this protein is UPF0319 protein VF_1616.